Consider the following 480-residue polypeptide: NADH-quinone oxidoreductase subunit N 1 (480 aa).

Transmembrane regions (helical) follow at residues 12–32 (LSMP…IGVF), 38–58 (TPTV…WLVL), 78–98 (FMKV…VGHA), 106–126 (FEFP…ISAN), 128–148 (LISL…VAAI), 163–183 (FVLG…VYGF), 203–223 (LGLV…ISAV), 241–261 (TAFF…RIVI), 271–291 (WQQI…FAAI), 303–323 (SSIG…MAGV), 326–346 (VILY…CILA), 372–392 (ATVL…AGFF), 396–416 (FVFV…GVLA), and 449–469 (LVFG…GPLG).

The protein belongs to the complex I subunit 2 family. In terms of assembly, NDH-1 is composed of 14 different subunits. Subunits NuoA, H, J, K, L, M, N constitute the membrane sector of the complex.

The protein resides in the cell inner membrane. The enzyme catalyses a quinone + NADH + 5 H(+)(in) = a quinol + NAD(+) + 4 H(+)(out). NDH-1 shuttles electrons from NADH, via FMN and iron-sulfur (Fe-S) centers, to quinones in the respiratory chain. The immediate electron acceptor for the enzyme in this species is believed to be ubiquinone. Couples the redox reaction to proton translocation (for every two electrons transferred, four hydrogen ions are translocated across the cytoplasmic membrane), and thus conserves the redox energy in a proton gradient. This Rhizobium meliloti (strain 1021) (Ensifer meliloti) protein is NADH-quinone oxidoreductase subunit N 1.